The chain runs to 107 residues: Putative nucleosome assembly protein 1-like 6 (107 aa).

It belongs to the nucleosome assembly protein (NAP) family.

This Homo sapiens (Human) protein is Putative nucleosome assembly protein 1-like 6.